The sequence spans 330 residues: Trans-1,2-dihydrobenzene-1,2-diol dehydrogenase (330 aa).

The protein belongs to the Gfo/Idh/MocA family. In terms of assembly, homodimer.

It carries out the reaction (1R,2R)-1,2-dihydrobenzene-1,2-diol + NADP(+) = catechol + NADPH + H(+). The catalysed reaction is D-xylose + NADP(+) = D-xylono-1,5-lactone + NADPH + H(+). In Xenopus tropicalis (Western clawed frog), this protein is Trans-1,2-dihydrobenzene-1,2-diol dehydrogenase (dhdh).